Consider the following 1755-residue polypeptide: Transposon Ty1-PR1 Gag-Pol polyprotein (1755 aa).

4 stretches are compositionally biased toward polar residues: residues 1 to 23 (MESQQLSQHSPISHGSACASVTS), 48 to 60 (TKANSQQTTTPAS), 71 to 93 (SPQTAQSHSPQNGPYPQQCMMTQ), and 127 to 152 (QSQFPQYPSSVGTPLSTPSPESGNTF). Disordered regions lie at residues 1 to 93 (MESQ…MMTQ), 126 to 173 (PQSQ…RPPP), and 352 to 421 (GSRN…SKST). Over residues 153-165 (TDSSSADSDMTST) the composition is skewed to low complexity. The RNA-binding stretch occupies residues 299–401 (NNGIHINNKV…NSKSKTARAH (103 aa)). A compositionally biased stretch (low complexity) spans 402-418 (NVSTSNNSPSTDNDSIS). At serine 416 the chain carries Phosphoserine. Aspartate 461 serves as the catalytic For protease activity; shared with dimeric partner. The interval 583–640 (NVHTSESTRKYPYPFIHRMLAHANAQTIRYSLKNNTITYFNESDVDWSSAIDYQCPDC) is integrase-type zinc finger-like. The 176-residue stretch at 660 to 835 (NSYEPFQYLH…AGLDISTLLP (176 aa)) folds into the Integrase catalytic domain. Aspartate 671 and aspartate 736 together coordinate Mg(2+). 3 disordered regions span residues 956 to 1087 (SKAV…ETEK), 1092 to 1111 (RSPSIDASPPENNSSHNIVP), and 1130 to 1187 (DLPL…DNET). Over residues 960-969 (SPTDSTPPST) the composition is skewed to low complexity. The segment covering 1005–1015 (STPQISNIEST) has biased composition (polar residues). The span at 1038–1053 (ESSHASKSKDFRHSDS) shows a compositional bias: basic and acidic residues. Composition is skewed to polar residues over residues 1054–1082 (YSENETNHTNVPISSTGGTNNKTVPQISD) and 1101–1111 (PENNSSHNIVP). The Bipartite nuclear localization signal motif lies at 1178–1212 (KKRSLEDNETEIKVSRDTWNTKNMRSLEPPRSKKR). The Reverse transcriptase Ty1/copia-type domain occupies 1338–1476 (NNYYITQLDI…DILGLEIKYQ (139 aa)). The Mg(2+) site is built by aspartate 1346, aspartate 1427, aspartate 1428, aspartate 1610, glutamate 1652, and aspartate 1685. The RNase H Ty1/copia-type domain occupies 1610–1752 (DASYGNQPYY…IKTFKLLTNK (143 aa)).

The capsid protein forms a homotrimer, from which the VLPs are assembled. The protease is a homodimer, whose active site consists of two apposed aspartic acid residues. In terms of processing, initially, virus-like particles (VLPs) are composed of the structural unprocessed proteins Gag and Gag-Pol, and also contain the host initiator methionine tRNA (tRNA(i)-Met) which serves as a primer for minus-strand DNA synthesis, and a dimer of genomic Ty RNA. Processing of the polyproteins occurs within the particle and proceeds by an ordered pathway, called maturation. First, the protease (PR) is released by autocatalytic cleavage of the Gag-Pol polyprotein yielding capsid protein p45 and a Pol-p154 precursor protein. This cleavage is a prerequisite for subsequent processing of Pol-p154 at the remaining sites to release the mature structural and catalytic proteins. Maturation takes place prior to the RT reaction and is required to produce transposition-competent VLPs.

The protein localises to the cytoplasm. Its subcellular location is the nucleus. The catalysed reaction is DNA(n) + a 2'-deoxyribonucleoside 5'-triphosphate = DNA(n+1) + diphosphate. It catalyses the reaction Endonucleolytic cleavage to 5'-phosphomonoester.. Functionally, capsid protein (CA) is the structural component of the virus-like particle (VLP), forming the shell that encapsulates the retrotransposons dimeric RNA genome. The particles are assembled from trimer-clustered units and there are holes in the capsid shells that allow for the diffusion of macromolecules. CA also has nucleocapsid-like chaperone activity, promoting primer tRNA(i)-Met annealing to the multipartite primer-binding site (PBS), dimerization of Ty1 RNA and initiation of reverse transcription. The aspartyl protease (PR) mediates the proteolytic cleavages of the Gag and Gag-Pol polyproteins after assembly of the VLP. In terms of biological role, reverse transcriptase/ribonuclease H (RT) is a multifunctional enzyme that catalyzes the conversion of the retro-elements RNA genome into dsDNA within the VLP. The enzyme displays a DNA polymerase activity that can copy either DNA or RNA templates, and a ribonuclease H (RNase H) activity that cleaves the RNA strand of RNA-DNA heteroduplexes during plus-strand synthesis and hydrolyzes RNA primers. The conversion leads to a linear dsDNA copy of the retrotransposon that includes long terminal repeats (LTRs) at both ends. Its function is as follows. Integrase (IN) targets the VLP to the nucleus, where a subparticle preintegration complex (PIC) containing at least integrase and the newly synthesized dsDNA copy of the retrotransposon must transit the nuclear membrane. Once in the nucleus, integrase performs the integration of the dsDNA into the host genome. This is Transposon Ty1-PR1 Gag-Pol polyprotein (TY1B-PR1) from Saccharomyces cerevisiae (strain ATCC 204508 / S288c) (Baker's yeast).